The following is a 198-amino-acid chain: Probable GTP-binding protein EngB (198 aa).

The EngB-type G domain occupies 36–198 (SDPQFAFIGR…NLSKLQELLE (163 aa)). Residues 44–51 (GRSNVGKS), 70–74 (GRTQL), 88–91 (DLPG), 155–158 (NKID), and 182–184 (ISA) contribute to the GTP site. Positions 51 and 72 each coordinate Mg(2+).

This sequence belongs to the TRAFAC class TrmE-Era-EngA-EngB-Septin-like GTPase superfamily. EngB GTPase family. The cofactor is Mg(2+).

In terms of biological role, necessary for normal cell division and for the maintenance of normal septation. The protein is Probable GTP-binding protein EngB of Mesomycoplasma hyopneumoniae (strain J / ATCC 25934 / NCTC 10110) (Mycoplasma hyopneumoniae).